Consider the following 201-residue polypeptide: Peptidyl-tRNA hydrolase (201 aa).

Residue Y17 participates in tRNA binding. H22 acts as the Proton acceptor in catalysis. TRNA is bound by residues F76, N78, and N124.

It belongs to the PTH family. In terms of assembly, monomer.

It is found in the cytoplasm. It carries out the reaction an N-acyl-L-alpha-aminoacyl-tRNA + H2O = an N-acyl-L-amino acid + a tRNA + H(+). Its function is as follows. Hydrolyzes ribosome-free peptidyl-tRNAs (with 1 or more amino acids incorporated), which drop off the ribosome during protein synthesis, or as a result of ribosome stalling. In terms of biological role, catalyzes the release of premature peptidyl moieties from peptidyl-tRNA molecules trapped in stalled 50S ribosomal subunits, and thus maintains levels of free tRNAs and 50S ribosomes. This chain is Peptidyl-tRNA hydrolase, found in Oleidesulfovibrio alaskensis (strain ATCC BAA-1058 / DSM 17464 / G20) (Desulfovibrio alaskensis).